A 295-amino-acid chain; its full sequence is CBY1-interacting BAR domain-containing protein 1 (295 aa).

A mitochondrion-targeting transit peptide spans 1 to 49; that stretch reads MMSRTPDARARDTQTKQIQENITSVEKHFGDLCQLFAAYVRKTARLRDK. A BAR-like region spans residues 12–222; sequence DTQTKQIQEN…NVDEEGDLEV (211 aa). Positions 111 to 185 form a coiled coil; it reads KREDLKQTQS…KQKIRDIKKV (75 aa). A compositionally biased stretch (polar residues) spans 243-265; sequence SKLSLNRTGTSMSKSGTMQSRTS. The tract at residues 243 to 295 is disordered; that stretch reads SKLSLNRTGTSMSKSGTMQSRTSSRQRKRDDEEDEEEDDEDEDDLEEVTDDEH. A compositionally biased stretch (acidic residues) spans 273–295; that stretch reads DEEDEEEDDEDEDDLEEVTDDEH.

It belongs to the CIBAR family.

It is found in the cytoplasm. It localises to the cytoskeleton. Its subcellular location is the microtubule organizing center. The protein localises to the centrosome. The protein resides in the centriole. It is found in the cell projection. It localises to the cilium. Its subcellular location is the nucleus. The protein localises to the mitochondrion inner membrane. The protein resides in the flagellum. In terms of biological role, plays a critical role in regulating mitochondrial ultrastructure and function by maintaining the integrity of mitochondrial morphology, particularly the organization of cristae. Plays a crucial role in ciliogenesis. Plays a key role in the correct positioning of the annulus, a septin-based ring structure in the sperm flagellum, serving both as a physical barrier and a membrane diffusion barrier that separates the midpiece (MP) from the principal piece (PP). The sequence is that of CBY1-interacting BAR domain-containing protein 1 (cibar1) from Danio rerio (Zebrafish).